A 247-amino-acid polypeptide reads, in one-letter code: Neurotrophic factor BDNF precursor form (247 aa).

The signal sequence occupies residues 1–18; it reads MTILFLTMVISYFGCMKA. The propeptide occupies 19–128; the sequence is APMKEANIRG…AANMSMRVRR (110 aa). N-linked (GlcNAc...) asparagine glycosylation is present at Asn121. Cystine bridges form between Cys141-Cys208, Cys186-Cys237, and Cys196-Cys239.

Belongs to the NGF-beta family. In terms of assembly, monomers and homodimers. Binds to NTRK2/TRKB. Can form heterodimers with other neurotrophin family members, such as NTF3 and NTF4 (in vitro), but the physiological relevance of this is not clear. BDNF precursor form: interacts with the heterodimer formed by NGFR and SORCS2. In terms of processing, N-glycosylated and glycosulfated, contrary to mature BDNF. Mature BDNF is produced by proteolytic removal of the propeptide, catalyzed by a FURIN family member. In addition, the precursor form is proteolytically cleaved within the propeptide, but this is not an obligatory intermediate for the production of mature BDNF. Can be converted into mature BDNF by plasmin (PLG). Detected in blood plasma and in saliva (at protein level). Brain. Highly expressed in hippocampus, amygdala, cerebral cortex and cerebellum. Also expressed in heart, lung, skeletal muscle, testis, prostate and placenta.

The protein localises to the secreted. In terms of biological role, important signaling molecule that activates signaling cascades downstream of NTRK2. During development, promotes the survival and differentiation of selected neuronal populations of the peripheral and central nervous systems. Participates in axonal growth, pathfinding and in the modulation of dendritic growth and morphology. Major regulator of synaptic transmission and plasticity at adult synapses in many regions of the CNS. The versatility of BDNF is emphasized by its contribution to a range of adaptive neuronal responses including long-term potentiation (LTP), long-term depression (LTD), certain forms of short-term synaptic plasticity, as well as homeostatic regulation of intrinsic neuronal excitability. Its function is as follows. Important signaling molecule that activates signaling cascades downstream of NTRK2. Activates signaling cascades via the heterodimeric receptor formed by NGFR and SORCS2. Signaling via NGFR and SORCS2 plays a role in synaptic plasticity and long-term depression (LTD). Binding to NGFR and SORCS2 promotes neuronal apoptosis. Promotes neuronal growth cone collapse. This chain is Neurotrophic factor BDNF precursor form, found in Homo sapiens (Human).